An 873-amino-acid chain; its full sequence is Tyrosine-protein kinase receptor TYRO3 (873 aa).

The first 28 residues, 1–28 (MELRRSMALPRLLLLGLWAAALRDGAVA), serve as a signal peptide directing secretion. 2 consecutive Ig-like C2-type domains span residues 29 to 116 (AGMK…KEES) and 127 to 208 (PYFT…ATVQ). The Extracellular segment spans residues 29–416 (AGMKFTGSPI…QRQPPYGTSW (388 aa)). Asparagine 51 carries N-linked (GlcNAc...) asparagine glycosylation. 2 cysteine pairs are disulfide-bonded: cysteine 52-cysteine 105 and cysteine 148-cysteine 191. N-linked (GlcNAc...) asparagine glycosylation is found at asparagine 179, asparagine 184, asparagine 218, asparagine 228, asparagine 281, asparagine 353, and asparagine 367. Fibronectin type-III domains follow at residues 215–308 (PPLN…TLEL) and 310–403 (PSST…AQEV). A helical transmembrane segment spans residues 417–437 (VPVALGILTALVTAVALALIL). The Cytoplasmic segment spans residues 438-873 (LRKRRKETRF…ELETEGEKSC (436 aa)). The region spanning 505 to 776 (FTLGRMLGKG…GVLRSQLEMI (272 aa)) is the Protein kinase domain. Residues 511-519 (LGKGEFGSV) and lysine 537 contribute to the ATP site. Aspartate 642 (proton acceptor) is an active-site residue. Position 673 is a phosphotyrosine; by autocatalysis (tyrosine 673). Residues 845 to 873 (VEGERHPEGQEGENKSLLYELETEGEKSC) form a disordered region. Over residues 847 to 858 (GERHPEGQEGEN) the composition is skewed to basic and acidic residues.

It belongs to the protein kinase superfamily. Tyr protein kinase family. AXL/UFO subfamily. Post-translationally, autophosphorylated on tyrosine residues. As to expression, detected in embryonic retina (at protein level). detected in brain, retina, kidney and in retinal Mueller glia-like cells.

The protein localises to the cell membrane. The catalysed reaction is L-tyrosyl-[protein] + ATP = O-phospho-L-tyrosyl-[protein] + ADP + H(+). Receptor tyrosine kinase that transduces signals from the extracellular matrix into the cytoplasm by binding to several ligands. Regulates many physiological processes including cell survival, migration and differentiation. Ligand binding at the cell surface induces dimerization and autophosphorylation of TYRO3 on its intracellular domain that provides docking sites for downstream signaling molecules. Following activation by ligand, enhances PI3-kinase activity and activates the AKT survival pathway, including nuclear translocation of NF-kappa-B and up-regulation of transcription of NF-kappa-B-regulated genes. The polypeptide is Tyrosine-protein kinase receptor TYRO3 (TYRO3) (Gallus gallus (Chicken)).